Consider the following 142-residue polypeptide: Small ribosomal subunit protein bS18m (142 aa).

This sequence belongs to the bacterial ribosomal protein bS18 family. In terms of assembly, component of the mitochondrial small ribosomal subunit (mt-SSU). Mature mammalian 55S mitochondrial ribosomes consist of a small (28S) and a large (39S) subunit. The 28S small subunit contains a 12S ribosomal RNA (12S mt-rRNA) and 30 different proteins. The 39S large subunit contains a 16S rRNA (16S mt-rRNA), a copy of mitochondrial valine transfer RNA (mt-tRNA(Val)), which plays an integral structural role, and 52 different proteins. bS18m has a zinc binding site.

It localises to the mitochondrion. The sequence is that of Small ribosomal subunit protein bS18m (MRPS18C) from Homo sapiens (Human).